Consider the following 299-residue polypeptide: ATP phosphoribosyltransferase (299 aa).

It belongs to the ATP phosphoribosyltransferase family. Long subfamily. As to quaternary structure, equilibrium between an active dimeric form, an inactive hexameric form and higher aggregates. Interconversion between the various forms is largely reversible and is influenced by the natural substrates and inhibitors of the enzyme. Requires Mg(2+) as cofactor.

It localises to the cytoplasm. The catalysed reaction is 1-(5-phospho-beta-D-ribosyl)-ATP + diphosphate = 5-phospho-alpha-D-ribose 1-diphosphate + ATP. The protein operates within amino-acid biosynthesis; L-histidine biosynthesis; L-histidine from 5-phospho-alpha-D-ribose 1-diphosphate: step 1/9. Feedback inhibited by histidine. Its function is as follows. Catalyzes the condensation of ATP and 5-phosphoribose 1-diphosphate to form N'-(5'-phosphoribosyl)-ATP (PR-ATP). Has a crucial role in the pathway because the rate of histidine biosynthesis seems to be controlled primarily by regulation of HisG enzymatic activity. The protein is ATP phosphoribosyltransferase of Edwardsiella ictaluri (strain 93-146).